A 351-amino-acid polypeptide reads, in one-letter code: Divinyl chlorophyll a/b light-harvesting protein PcbA (351 aa).

6 helical membrane passes run 27–47, 64–84, 89–109, 202–222, 242–262, and 305–325; these read FIAAHAAHTGLIAFWAGAFTL, LIALPHLATLGIGFDEAGTFV, VTAIAIVHLVLSMVYGAGGLL, VMGGHAFLAFFMITGGAFHIA, AILSWSLAGIGWMAIVAAFWC, and LTNVHYFLGFFYIQGHLWHAL.

It belongs to the PsbB/PsbC family. IsiA/Pcb subfamily. The antenna complex consists of divinyl chlorophylls (a and b) and divinyl chlorophyll a/b binding proteins and binds more divinyl chlorophyll b than does the antenna complex from high-light-adapted Prochlorococcus. It depends on divinyl chlorophyll a as a cofactor. Divinyl chlorophyll b is required as a cofactor.

The protein localises to the cellular thylakoid membrane. In terms of biological role, the antenna complex functions as a light receptor, it captures and delivers excitation energy to photosystems II and I. The Prochlorales pcb genes are not related to higher plant LHCs. This chain is Divinyl chlorophyll a/b light-harvesting protein PcbA (pcbA), found in Prochlorococcus marinus (strain SARG / CCMP1375 / SS120).